Consider the following 215-residue polypeptide: Ran-specific GTPase-activating protein 1 (215 aa).

2 stretches are compositionally biased toward basic and acidic residues: residues 1-18 (MSAE…EEQK) and 26-35 (VASKQTEEAK). Residues 1–78 (MSAEQEKKTQ…ASPEVHFEPI (78 aa)) are disordered. Phosphoserine is present on Ser70. The region spanning 74-210 (HFEPIVKLSA…FEKYQEENAK (137 aa)) is the RanBD1 domain.

It belongs to the RANBP1 family.

It localises to the cytoplasm. Its function is as follows. Stimulates the GTPase activity in the presence of RNA1. May potentiate the action of RanGAP1 (RNA1), thus playing the role of a negative regulator. The polypeptide is Ran-specific GTPase-activating protein 1 (sbp1) (Schizosaccharomyces pombe (strain 972 / ATCC 24843) (Fission yeast)).